Consider the following 727-residue polypeptide: Anaphase-promoting complex subunit 5 (727 aa).

Position 180 is a phosphoserine (S180). TPR repeat units lie at residues 194–234, 235–285, 286–322, 323–359, 360–390, 391–438, 439–472, 473–512, 513–552, 553–592, 593–632, 633–668, and 669–708; these read QKQA…FNPD, FAEA…GRSL, RYAA…SNDH, VCLQ…FGLP, RAFA…SELI, DISI…TESF, AVAL…FPPN, SQHA…ALNG, IEGV…TEMV, ISVL…QYLA, SETV…ILDK, GRAM…NLTE, and AKNY…CAMV. T217 carries the post-translational modification Phosphothreonine.

Belongs to the APC5 family. In terms of assembly, the mammalian APC/C is composed at least of 14 distinct subunits ANAPC1, ANAPC2, CDC27/APC3, ANAPC4, ANAPC5, CDC16/APC6, ANAPC7, CDC23/APC8, ANAPC10, ANAPC11, CDC26/APC12, ANAPC13, ANAPC15 and ANAPC16 that assemble into a complex of at least 19 chains with a combined molecular mass of around 1.2 MDa; APC/C interacts with FZR1 and FBXO5.

It is found in the nucleus. Its subcellular location is the cytoplasm. The protein resides in the cytoskeleton. It localises to the spindle. Its pathway is protein modification; protein ubiquitination. Functionally, component of the anaphase promoting complex/cyclosome (APC/C), a cell cycle-regulated E3 ubiquitin ligase that controls progression through mitosis and the G1 phase of the cell cycle. The APC/C complex acts by mediating ubiquitination and subsequent degradation of target proteins: it mainly mediates the formation of 'Lys-11'-linked polyubiquitin chains and, to a lower extent, the formation of 'Lys-48'- and 'Lys-63'-linked polyubiquitin chains. The APC/C complex catalyzes assembly of branched 'Lys-11'-/'Lys-48'-linked branched ubiquitin chains on target proteins. The polypeptide is Anaphase-promoting complex subunit 5 (Anapc5) (Rattus norvegicus (Rat)).